A 309-amino-acid polypeptide reads, in one-letter code: Dicarboxylate carrier SLC25A8 (309 aa).

Residues methionine 1 to lysine 16 lie on the Mitochondrial intermembrane side of the membrane. Solcar repeat units follow at residues proline 11 to phenylalanine 106, alanine 114 to alanine 203, and aspartate 212 to alanine 297. Residues lysine 16–methionine 63 form an important for interaction with long-chain fatty acids region. Residues phenylalanine 17–arginine 40 traverse the membrane as a helical segment. Over leucine 41–serine 77 the chain is Mitochondrial matrix. The chain crosses the membrane as a helical span at residues leucine 78 to valine 103. Topologically, residues lysine 104–arginine 119 are mitochondrial intermembrane. Residues leucine 120–glutamine 145 form a helical membrane-spanning segment. Residues alanine 146–arginine 173 lie on the Mitochondrial matrix side of the membrane. The chain crosses the membrane as a helical span at residues glycine 174–leucine 199. Topologically, residues isoleucine 200 to histidine 217 are mitochondrial intermembrane. A helical membrane pass occupies residues phenylalanine 218–tyrosine 242. Topologically, residues methionine 243 to alanine 268 are mitochondrial matrix. The chain crosses the membrane as a helical span at residues phenylalanine 269–leucine 294. The segment at leucine 278–valine 285 is important for interaction with long-chain fatty acids. At lysine 295–phenylalanine 309 the chain is on the mitochondrial intermembrane side.

Belongs to the mitochondrial carrier (TC 2.A.29) family. In terms of assembly, homotetramer. Adopts an asymmetrical dimer of dimers functional form. Widely expressed in adult human tissues, including tissues rich in macrophages. Most expressed in white adipose tissue and skeletal muscle.

It localises to the mitochondrion inner membrane. It catalyses the reaction L-aspartate(out) + phosphate(in) + H(+)(in) = L-aspartate(in) + phosphate(out) + H(+)(out). It carries out the reaction oxaloacetate(out) + phosphate(in) + H(+)(in) = oxaloacetate(in) + phosphate(out) + H(+)(out). The catalysed reaction is (S)-malate(out) + phosphate(in) + H(+)(in) = (S)-malate(in) + phosphate(out) + H(+)(out). The enzyme catalyses malonate(out) + phosphate(in) + H(+)(in) = malonate(in) + phosphate(out) + H(+)(out). It catalyses the reaction sulfate(out) + phosphate(in) + H(+)(in) = sulfate(in) + phosphate(out) + H(+)(out). It carries out the reaction (S)-malate(out) = (S)-malate(in). The catalysed reaction is L-aspartate(out) = L-aspartate(in). The enzyme catalyses phosphate(in) = phosphate(out). It catalyses the reaction chloride(in) = chloride(out). It carries out the reaction H(+)(in) = H(+)(out). The catalysed reaction is a long-chain fatty acid(out) = a long-chain fatty acid(in). Its activity is regulated as follows. Inhibited by pyridoxal- 5'-phosphate, bathophenanthroline, tannic acid, bromocresol purple, butylmalonate and phenylsuccinate. Proton conductance is activated by cardiolipin and long-chain free fatty acids and inhibited by purine nucleotides ATP and ADP. Chloride ion transporter activity is inhibited by long-chain free fatty acids. Functionally, antiporter that exports dicarboxylate intermediates of the Krebs cycle in exchange for phosphate plus a proton across the inner membrane of mitochondria, a process driven by mitochondrial motive force with an overall impact on glycolysis, glutaminolysis and glutathione-dependent redox balance. Continuous export of oxaloacetate and related four-carbon dicarboxylates from mitochondrial matrix into the cytosol negatively regulates the oxidation of acetyl-CoA substrates via the Krebs cycle, lowering the ATP/ADP ratio and reactive oxygen species (ROS) production. May mediate inducible proton entry into the mitochondrial matrix affecting ATP turnover as a protection mechanism against oxidative stress. The proton currents are most likely associated with fatty acid flipping across the inner membrane of mitochondria in a metabolic process regulated by free fatty acids and purine nucleotides. Regulates the use of glucose as a source of energy. Required for glucose-induced DRP1-dependent mitochondrial fission and neuron activation in the ventromedial nucleus of the hypothalamus (VMH). This mitochondrial adaptation mechanism modulates the VMH pool of glucose-excited neurons with an impact on systemic glucose homeostasis. Regulates ROS levels and metabolic reprogramming of macrophages during the resolution phase of inflammation. Attenuates ROS production in response to IL33 to preserve the integrity of the Krebs cycle required for persistent production of itaconate and subsequent GATA3-dependent differentiation of inflammation-resolving alternatively activated macrophages. Can unidirectionally transport anions including L-malate, L-aspartate, phosphate and chloride ions. Does not mediate adaptive thermogenesis. This is Dicarboxylate carrier SLC25A8 (UCP2) from Homo sapiens (Human).